The chain runs to 979 residues: Pro-apoptotic serine protease NMA111 (979 aa).

The span at 1-20 shows a compositional bias: basic and acidic residues; that stretch reads MKRNGESHLNGEAKKSRTEQ. Residues 1-43 are disordered; the sequence is MKRNGESHLNGEAKKSRTEQNQEQQDYQDEYYSSSDEELLPSS. The span at 21 to 34 shows a compositional bias: low complexity; sequence NQEQQDYQDEYYSS. The interval 65-260 is serine protease; the sequence is KVVNSVVSIQ…LPVSRPKRAL (196 aa). Residues His-108, Asp-139, and Ser-222 each act as charge relay system in the active site. 2 consecutive PDZ domains span residues 277-362 and 871-943; these read EWQL…FVFQ and PHYG…VSFD.

Belongs to the peptidase S1C family.

It is found in the nucleus. Functionally, nuclear serine protease which mediates apoptosis. In Lodderomyces elongisporus (strain ATCC 11503 / CBS 2605 / JCM 1781 / NBRC 1676 / NRRL YB-4239) (Yeast), this protein is Pro-apoptotic serine protease NMA111 (NMA111).